The sequence spans 177 residues: MATIGIFFGSDTGQTRKVAKLIHQKLDGIADAPLDVRRATREQFLSYPVLLLGTPTLGDGELPGVEAGSQYDSWQEFTNTLSEADLTGKTVALFGLGDQLNYSKNFVSAMRILYDLVIARGACVVGNWPREGYKFSFSAALLENNEFVGLPLDQENQYDLTEERIDSWLEKLKPAVL.

Positions 4–173 constitute a Flavodoxin-like domain; the sequence is IGIFFGSDTG…RIDSWLEKLK (170 aa).

This sequence belongs to the flavodoxin family. Requires FMN as cofactor.

In terms of biological role, low-potential electron donor to a number of redox enzymes. NifF is the electron donor to nitrogenase. The sequence is that of Flavodoxin (nifF) from Enterobacter agglomerans (Erwinia herbicola).